The chain runs to 193 residues: Ion-translocating oxidoreductase complex subunit A (193 aa).

The next 6 membrane-spanning stretches (helical) occupy residues leucine 5–leucine 25, isoleucine 39–valine 59, leucine 67–phenylalanine 87, valine 102–leucine 122, isoleucine 134–methionine 154, and serine 171–valine 191.

It belongs to the NqrDE/RnfAE family. The complex is composed of six subunits: RnfA, RnfB, RnfC, RnfD, RnfE and RnfG.

The protein resides in the cell inner membrane. In terms of biological role, part of a membrane-bound complex that couples electron transfer with translocation of ions across the membrane. This is Ion-translocating oxidoreductase complex subunit A from Aliivibrio fischeri (strain ATCC 700601 / ES114) (Vibrio fischeri).